A 445-amino-acid chain; its full sequence is Histamine H3 receptor (445 aa).

Residues M1–A39 lie on the Extracellular side of the membrane. Residue N11 is glycosylated (N-linked (GlcNAc...) asparagine). A helical transmembrane segment spans residues L40–V60. The Cytoplasmic portion of the chain corresponds to A61 to N70. Residues F71 to Y91 form a helical membrane-spanning segment. Over V92–K108 the chain is Extracellular. The cysteines at positions 107 and 188 are disulfide-linked. Residues L109–S129 form a helical membrane-spanning segment. At Y130–M156 the chain is on the cytoplasmic side. Residues L157–L177 form a helical membrane-spanning segment. Residues S178–W196 lie on the Extracellular side of the membrane. A helical membrane pass occupies residues Y197 to F217. Residues N218–S359 lie on the Cytoplasmic side of the membrane. Disordered regions lie at residues R237–G260 and E288–R336. The segment covering P242 to G257 has biased composition (pro residues). Over residues T290 to S299 the composition is skewed to gly residues. A compositionally biased stretch (low complexity) spans V300 to R312. Residues L360–I380 traverse the membrane as a helical segment. Residues R381–E395 are Extracellular-facing. A helical transmembrane segment spans residues T396–H416. Residues H417–K445 are Cytoplasmic-facing. S439 carries the phosphoserine modification.

The protein belongs to the G-protein coupled receptor 1 family. Expressed predominantly in the CNS, with the greatest expression in the thalamus and caudate nucleus. The various isoforms are mainly coexpressed in brain, but their relative expression level varies in a region-specific manner. Isoform 3 and isoform 7 are highly expressed in the thalamus, caudate nucleus and cerebellum while isoform 5 and isoform 6 show a poor expression. Isoform 5 and isoform 6 show a high expression in the amygdala, substantia nigra, cerebral cortex and hypothalamus. Isoform 7 is not found in hypothalamus or substantia nigra.

It localises to the cell membrane. Functionally, the H3 subclass of histamine receptors could mediate the histamine signals in CNS and peripheral nervous system. Signals through the inhibition of adenylate cyclase and displays high constitutive activity (spontaneous activity in the absence of agonist). Agonist stimulation of isoform 3 neither modified adenylate cyclase activity nor induced intracellular calcium mobilization. The chain is Histamine H3 receptor (HRH3) from Homo sapiens (Human).